We begin with the raw amino-acid sequence, 354 residues long: DNA polymerase IV (354 aa).

Residues 8–189 form the UmuC domain; that stretch reads IIHVDMDCFY…LPLEKIPGVG (182 aa). The Mg(2+) site is built by aspartate 12 and aspartate 107. Glutamate 108 is an active-site residue.

Belongs to the DNA polymerase type-Y family. In terms of assembly, monomer. Mg(2+) is required as a cofactor.

It localises to the cytoplasm. The enzyme catalyses DNA(n) + a 2'-deoxyribonucleoside 5'-triphosphate = DNA(n+1) + diphosphate. Poorly processive, error-prone DNA polymerase involved in untargeted mutagenesis. Copies undamaged DNA at stalled replication forks, which arise in vivo from mismatched or misaligned primer ends. These misaligned primers can be extended by PolIV. Exhibits no 3'-5' exonuclease (proofreading) activity. May be involved in translesional synthesis, in conjunction with the beta clamp from PolIII. This is DNA polymerase IV from Vibrio parahaemolyticus serotype O3:K6 (strain RIMD 2210633).